The chain runs to 125 residues: Outer membrane protein assembly factor BamE (125 aa).

The N-terminal stretch at 1 to 17 is a signal peptide; the sequence is MNKTLILALSALLGLAA. Residue Cys18 is the site of N-palmitoyl cysteine attachment. A lipid anchor (S-diacylglycerol cysteine) is attached at Cys18.

This sequence belongs to the BamE family. As to quaternary structure, part of the Bam complex.

It is found in the cell outer membrane. Functionally, part of the outer membrane protein assembly complex, which is involved in assembly and insertion of beta-barrel proteins into the outer membrane. The protein is Outer membrane protein assembly factor BamE of Neisseria meningitidis serogroup B (strain ATCC BAA-335 / MC58).